The following is a 930-amino-acid chain: Protein translocase subunit SecA (930 aa).

ATP-binding positions include glutamine 87, 105–109 (GEGKT), and aspartate 516. 4 residues coordinate Zn(2+): cysteine 914, cysteine 916, cysteine 925, and histidine 926.

The protein belongs to the SecA family. As to quaternary structure, monomer and homodimer. Part of the essential Sec protein translocation apparatus which comprises SecA, SecYEG and auxiliary proteins SecDF-YajC and YidC. Requires Zn(2+) as cofactor.

The protein localises to the cell inner membrane. Its subcellular location is the cytoplasm. It catalyses the reaction ATP + H2O + cellular proteinSide 1 = ADP + phosphate + cellular proteinSide 2.. Functionally, part of the Sec protein translocase complex. Interacts with the SecYEG preprotein conducting channel. Has a central role in coupling the hydrolysis of ATP to the transfer of proteins into and across the cell membrane, serving both as a receptor for the preprotein-SecB complex and as an ATP-driven molecular motor driving the stepwise translocation of polypeptide chains across the membrane. The chain is Protein translocase subunit SecA from Variovorax paradoxus (strain S110).